A 427-amino-acid chain; its full sequence is Glutamate-1-semialdehyde 2,1-aminomutase (427 aa).

Lys265 is modified (N6-(pyridoxal phosphate)lysine).

Belongs to the class-III pyridoxal-phosphate-dependent aminotransferase family. HemL subfamily. Homodimer. Pyridoxal 5'-phosphate serves as cofactor.

It localises to the cytoplasm. It carries out the reaction (S)-4-amino-5-oxopentanoate = 5-aminolevulinate. It functions in the pathway porphyrin-containing compound metabolism; protoporphyrin-IX biosynthesis; 5-aminolevulinate from L-glutamyl-tRNA(Glu): step 2/2. The polypeptide is Glutamate-1-semialdehyde 2,1-aminomutase (Idiomarina loihiensis (strain ATCC BAA-735 / DSM 15497 / L2-TR)).